Reading from the N-terminus, the 174-residue chain is Ribosome maturation factor RimM (174 aa).

Residues 96–170 (PDEFYDHELE…YVVIDPPEGL (75 aa)) enclose the PRC barrel domain.

The protein belongs to the RimM family. As to quaternary structure, binds ribosomal protein uS19.

The protein resides in the cytoplasm. Functionally, an accessory protein needed during the final step in the assembly of 30S ribosomal subunit, possibly for assembly of the head region. Essential for efficient processing of 16S rRNA. May be needed both before and after RbfA during the maturation of 16S rRNA. It has affinity for free ribosomal 30S subunits but not for 70S ribosomes. The polypeptide is Ribosome maturation factor RimM (Nocardia farcinica (strain IFM 10152)).